We begin with the raw amino-acid sequence, 680 residues long: ABC transporter B family member 24, mitochondrial (680 aa).

Residues 1 to 75 constitute a mitochondrion transit peptide; the sequence is MMRVSQLQLC…MFFSTSTSAP (75 aa). The region spanning 108 to 402 is the ABC transmembrane type-1 domain; the sequence is VISAFACLVG…LGVVYSDTVQ (295 aa). Transmembrane regions (helical) follow at residues 109 to 129, 145 to 165, 232 to 252, 255 to 275, 340 to 360, and 376 to 396; these read ISAF…PFLF, NPYL…YGIA, AMVF…CILA, FGAV…AFTL, FALL…TAMV, and LVMV…LGVV. Residues 439-673 form the ABC transporter domain; it reads ISFENVHFSY…SGRYAKLWTQ (235 aa). ATP-binding positions include Tyr-448 and 472–483; that span reads GSSGSGKSTILR.

It belongs to the ABC transporter superfamily. ABCB family. Heavy Metal importer (TC 3.A.1.210) subfamily. In terms of assembly, homodimer. As to expression, mostly expressed at low levels in roots and flowers.

It localises to the mitochondrion inner membrane. Its function is as follows. Performs an essential function in the generation of cytoplasmic iron-sulfur proteins by mediating export of Fe/S cluster precursors synthesized by NFS1 and other mitochondrial proteins. Not involved in the export of cyclic pyranopterin monophosphate (cPMP) from mitochondria to the cytosol. This chain is ABC transporter B family member 24, mitochondrial (ABCB24), found in Arabidopsis thaliana (Mouse-ear cress).